The sequence spans 268 residues: Photosystem II 22 kDa protein 1, chloroplastic (268 aa).

The transit peptide at 1–60 directs the protein to the chloroplast; sequence MAQSMLVSGANGTVAAASTSRLQPVRPTPFSRLVLSQPSSSLGRAVSVKTVALFGRSKTK. 2 repeat units span residues 54–161 and 164–268. A run of 4 helical transmembrane segments spans residues 99–119, 133–153, 199–219, and 234–254; these read VAML…KGIL, AEPL…GALG, LFVG…EIIT, and PINE…IAAI.

Belongs to the ELIP/psbS family. In terms of tissue distribution, expressed at low levels in leaves (at protein level).

Its subcellular location is the plastid. It localises to the chloroplast thylakoid membrane. Functionally, involved in high light-mediated energy-dependent nonphotochemical quenching (NPQ, qE) and thermal dissipation (TD) thus regulating energy conversion in photosystem II and protecting from photoinhibition. Also seems to regulate quantum yield of electron transport in fluctuating light conditions. This chain is Photosystem II 22 kDa protein 1, chloroplastic, found in Oryza sativa subsp. indica (Rice).